A 487-amino-acid chain; its full sequence is Complement C1r subcomponent-like protein (487 aa).

A signal peptide spans 1 to 35; that stretch reads MPGPRVWGKYLWRSPHSKGCPGAMWWLLLWGVLQA. In terms of domain architecture, CUB spans 39-163; it reads RGSVLLAQEL…KGFLALYQTV (125 aa). Cysteine 94 and cysteine 112 are oxidised to a cystine. 2 N-linked (GlcNAc...) asparagine glycosylation sites follow: asparagine 147 and asparagine 166. In terms of domain architecture, Sushi spans 165–230; it reads VNYSQPISEA…DGEEVLQCMP (66 aa). An intrachain disulfide couples cysteine 195 to cysteine 228. Residue asparagine 242 is glycosylated (N-linked (GlcNAc...) (complex) asparagine). The 240-residue stretch at 245–484 folds into the Peptidase S1 domain; sequence TLGSSRAKLG…YVDWIKGVMN (240 aa). Histidine 283 acts as the Charge relay system in catalysis. Asparagine 296 carries an N-linked (GlcNAc...) asparagine glycan. Aspartate 339 (charge relay system) is an active-site residue. N-linked (GlcNAc...) asparagine glycosylation occurs at asparagine 363. Intrachain disulfides connect cysteine 402-cysteine 421 and cysteine 432-cysteine 462. Serine 436 (charge relay system) is an active-site residue.

It belongs to the peptidase S1 family. In terms of tissue distribution, highly expressed in placenta, liver, kidney, pancreas, moderately in lung, spleen, prostate, ovary, colon, and PBL, and weakly in heart, skeletal muscle, thymus, testis, and small intestine. Expressed in PC-3 (prostate adenocarcinoma) and SK-OV-3 (ovary adenocarcinoma) cells, but not in LoVo and HT-29 (colon adenocarcinoma), SMMC7721 (hepatocellular carcinoma), CaoV-3 (ovary adenocarcinoma), HeLa (cervix epithelioid carcinoma), MCF-7 (breast adenocarcinoma), U-251MG (glioma) or A-549 (lung carcinoma) cells. Widely expressed in myeloid leukemia cell lines, including K-562 (chronic myelogenous leukemia), THP-1 (myelomonocytic leukemia), HL-60 and NB4 (promyelocytic leukemia), and KG-1 (acute myelogenous leukemia) cells. Expressed mainly in the liver and in serum (at protein level).

It is found in the secreted. Functionally, mediates the proteolytic cleavage of HP/haptoglobin in the endoplasmic reticulum. This chain is Complement C1r subcomponent-like protein (C1RL), found in Homo sapiens (Human).